Here is a 750-residue protein sequence, read N- to C-terminus: Catalase-peroxidase (750 aa).

The segment at residues 112–235 is a cross-link (tryptophyl-tyrosyl-methioninium (Trp-Tyr) (with M-261)); the sequence is WHSAGTYRIG…LGAAHMGLIY (124 aa). Histidine 113 serves as the catalytic Proton acceptor. The tryptophyl-tyrosyl-methioninium (Tyr-Met) (with W-112) cross-link spans 235–261; sequence YVNPEGHNGNPDPVEAASYIRETFGRM. Histidine 276 is a heme b binding site.

The protein belongs to the peroxidase family. Peroxidase/catalase subfamily. In terms of assembly, homodimer or homotetramer. It depends on heme b as a cofactor. Formation of the three residue Trp-Tyr-Met cross-link is important for the catalase, but not the peroxidase activity of the enzyme.

The catalysed reaction is H2O2 + AH2 = A + 2 H2O. It carries out the reaction 2 H2O2 = O2 + 2 H2O. Functionally, bifunctional enzyme with both catalase and broad-spectrum peroxidase activity. This Christiangramia forsetii (strain DSM 17595 / CGMCC 1.15422 / KT0803) (Gramella forsetii) protein is Catalase-peroxidase.